The chain runs to 119 residues: MICOS complex subunit MIC13 (119 aa).

Residues 1–7 lie on the Mitochondrial matrix side of the membrane; it reads MVARVWS. A helical membrane pass occupies residues 8 to 26; it reads LMRFLIKGSVAGGAVYLVY. The Mitochondrial intermembrane portion of the chain corresponds to 27 to 119; that stretch reads DQELLGPSDK…GWEYLKEHSK (93 aa).

This sequence belongs to the MICOS complex subunit Mic13 family. Component of the mitochondrial contact site and cristae organizing system (MICOS) complex, composed of at least MICOS10/MIC10, CHCHD3/MIC19, CHCHD6/MIC25, APOO/MIC26, MICOS13/MIC13, APOOL/MIC27 and IMMT/MIC60. The MICOS complex associates with mitochondrial outer membrane proteins SAMM50, MTX1 and MTX2 (together described as components of the mitochondrial outer membrane sorting assembly machinery (SAM) complex) and DNAJC11, mitochondrial inner membrane protein TMEM11 and with HSPA9. The MICOS and SAM complexes together with DNAJC11 are part of a large protein complex spanning both membranes termed the mitochondrial intermembrane space bridging (MIB) complex.

It localises to the mitochondrion inner membrane. Component of the MICOS complex, a large protein complex of the mitochondrial inner membrane that plays crucial roles in the maintenance of crista junctions, inner membrane architecture, and formation of contact sites to the outer membrane. Constituent of mature MICOS complex, it is required for the formation of cristae junction (CJ) and maintenance of cristae morphology. Required for the incorporation of MICOS10/MIC10 into the MICOS complex. The protein is MICOS complex subunit MIC13 (Micos13) of Mus musculus (Mouse).